Here is a 513-residue protein sequence, read N- to C-terminus: ATP synthase subunit alpha (513 aa).

169-176 (GDRQTGKT) is an ATP binding site.

This sequence belongs to the ATPase alpha/beta chains family. In terms of assembly, F-type ATPases have 2 components, CF(1) - the catalytic core - and CF(0) - the membrane proton channel. CF(1) has five subunits: alpha(3), beta(3), gamma(1), delta(1), epsilon(1). CF(0) has three main subunits: a(1), b(2) and c(9-12). The alpha and beta chains form an alternating ring which encloses part of the gamma chain. CF(1) is attached to CF(0) by a central stalk formed by the gamma and epsilon chains, while a peripheral stalk is formed by the delta and b chains.

It localises to the cell inner membrane. It carries out the reaction ATP + H2O + 4 H(+)(in) = ADP + phosphate + 5 H(+)(out). In terms of biological role, produces ATP from ADP in the presence of a proton gradient across the membrane. The alpha chain is a regulatory subunit. The chain is ATP synthase subunit alpha from Shewanella sp. (strain MR-4).